Here is a 750-residue protein sequence, read N- to C-terminus: Photosystem I P700 chlorophyll a apoprotein A1 (750 aa).

Transmembrane regions (helical) follow at residues 70–93 (VFSA…FHGA), 156–179 (LYCT…FHYH), 195–219 (LNHH…HVSL), 291–309 (IAHH…GHMY), 346–369 (WHAQ…HHMY), 385–411 (LSLF…IFMV), 433–455 (AIIS…LYIH), and 531–549 (FLVH…LILL). [4Fe-4S] cluster is bound by residues C573 and C582. Helical transmembrane passes span 589 to 610 (HVFL…HFSW) and 664 to 686 (LSAY…MFLF). H675 is a binding site for chlorophyll a'. Chlorophyll a contacts are provided by M683 and Y691. W692 is a binding site for phylloquinone. Residues 724 to 744 (AVGVTHYLLGGIATTWAFFLA) form a helical membrane-spanning segment.

The protein belongs to the PsaA/PsaB family. The PsaA/B heterodimer binds the P700 chlorophyll special pair and subsequent electron acceptors. PSI consists of a core antenna complex that captures photons, and an electron transfer chain that converts photonic excitation into a charge separation. The eukaryotic PSI reaction center is composed of at least 11 subunits. Requires P700 is a chlorophyll a/chlorophyll a' dimer, A0 is one or more chlorophyll a, A1 is one or both phylloquinones and FX is a shared 4Fe-4S iron-sulfur center. as cofactor.

The protein localises to the plastid. It is found in the chloroplast thylakoid membrane. It carries out the reaction reduced [plastocyanin] + hnu + oxidized [2Fe-2S]-[ferredoxin] = oxidized [plastocyanin] + reduced [2Fe-2S]-[ferredoxin]. In terms of biological role, psaA and PsaB bind P700, the primary electron donor of photosystem I (PSI), as well as the electron acceptors A0, A1 and FX. PSI is a plastocyanin-ferredoxin oxidoreductase, converting photonic excitation into a charge separation, which transfers an electron from the donor P700 chlorophyll pair to the spectroscopically characterized acceptors A0, A1, FX, FA and FB in turn. Oxidized P700 is reduced on the lumenal side of the thylakoid membrane by plastocyanin. This Triticum aestivum (Wheat) protein is Photosystem I P700 chlorophyll a apoprotein A1.